The chain runs to 325 residues: UPF0285 protein MMP0642 (325 aa).

The protein belongs to the UPF0285 family.

The protein is UPF0285 protein MMP0642 of Methanococcus maripaludis (strain DSM 14266 / JCM 13030 / NBRC 101832 / S2 / LL).